Here is a 169-residue protein sequence, read N- to C-terminus: NADH dehydrogenase [ubiquinone] 1 alpha subcomplex assembly factor 2 (169 aa).

The tract at residues 116-169 (TSEELLPPPVQTQIKGHASAPYFGKEEPSVAPSSTGKTFQPGSWMPRDGKSHNQ) is disordered. Ser-134 is subject to Phosphoserine. Polar residues predominate over residues 146–156 (APSSTGKTFQP).

It belongs to the complex I NDUFA12 subunit family. Interacts with ARMC9. In terms of tissue distribution, highly expressed in ESCC cells. Also expressed in heart, skeletal muscle, liver, and in fibroblasts.

The protein resides in the mitochondrion. In terms of biological role, acts as a molecular chaperone for mitochondrial complex I assembly. Complex I functions in the transfer of electrons from NADH to the respiratory chain. The immediate electron acceptor for the enzyme is believed to be ubiquinone. Is involved in the initial steps of cilia formation, including removal of CP110 from the mother centrioles, docking of membrane vesicles to the mother centrioles, and establishment of the transition zone. This is NADH dehydrogenase [ubiquinone] 1 alpha subcomplex assembly factor 2 (NDUFAF2) from Homo sapiens (Human).